The sequence spans 172 residues: Adenine phosphoribosyltransferase (172 aa).

This sequence belongs to the purine/pyrimidine phosphoribosyltransferase family. Homodimer.

The protein localises to the cytoplasm. The enzyme catalyses AMP + diphosphate = 5-phospho-alpha-D-ribose 1-diphosphate + adenine. It functions in the pathway purine metabolism; AMP biosynthesis via salvage pathway; AMP from adenine: step 1/1. Its function is as follows. Catalyzes a salvage reaction resulting in the formation of AMP, that is energically less costly than de novo synthesis. The chain is Adenine phosphoribosyltransferase from Staphylococcus carnosus (strain TM300).